A 584-amino-acid chain; its full sequence is 2-succinyl-5-enolpyruvyl-6-hydroxy-3-cyclohexene-1-carboxylate synthase (584 aa).

It belongs to the TPP enzyme family. MenD subfamily. Homodimer. It depends on Mg(2+) as a cofactor. Requires Mn(2+) as cofactor. The cofactor is thiamine diphosphate.

It catalyses the reaction isochorismate + 2-oxoglutarate + H(+) = 5-enolpyruvoyl-6-hydroxy-2-succinyl-cyclohex-3-ene-1-carboxylate + CO2. Its pathway is quinol/quinone metabolism; 1,4-dihydroxy-2-naphthoate biosynthesis; 1,4-dihydroxy-2-naphthoate from chorismate: step 2/7. The protein operates within quinol/quinone metabolism; menaquinone biosynthesis. Catalyzes the thiamine diphosphate-dependent decarboxylation of 2-oxoglutarate and the subsequent addition of the resulting succinic semialdehyde-thiamine pyrophosphate anion to isochorismate to yield 2-succinyl-5-enolpyruvyl-6-hydroxy-3-cyclohexene-1-carboxylate (SEPHCHC). The sequence is that of 2-succinyl-5-enolpyruvyl-6-hydroxy-3-cyclohexene-1-carboxylate synthase from Bacillus cytotoxicus (strain DSM 22905 / CIP 110041 / 391-98 / NVH 391-98).